The following is a 99-amino-acid chain: Integration host factor subunit alpha (99 aa).

Positions 52–73 are disordered; sequence FGNFTLRDKPQRPGRNPKTGEE.

Belongs to the bacterial histone-like protein family. In terms of assembly, heterodimer of an alpha and a beta chain.

Functionally, this protein is one of the two subunits of integration host factor, a specific DNA-binding protein that functions in genetic recombination as well as in transcriptional and translational control. The chain is Integration host factor subunit alpha from Legionella pneumophila subsp. pneumophila (strain Philadelphia 1 / ATCC 33152 / DSM 7513).